The chain runs to 865 residues: Leucine--tRNA ligase (865 aa).

A 'HIGH' region motif is present at residues 58–68 (PYPSGNLHMGH). The 'KMSKS' region motif lies at 629 to 633 (KMSKS). K632 contacts ATP.

This sequence belongs to the class-I aminoacyl-tRNA synthetase family.

The protein localises to the cytoplasm. The enzyme catalyses tRNA(Leu) + L-leucine + ATP = L-leucyl-tRNA(Leu) + AMP + diphosphate. This chain is Leucine--tRNA ligase, found in Synechococcus sp. (strain ATCC 27144 / PCC 6301 / SAUG 1402/1) (Anacystis nidulans).